The following is a 357-amino-acid chain: Membrane-bound lytic murein transglycosylase C (357 aa).

Residues 1-15 (MKKYLLLALLPFLYA) form the signal peptide. Residue C16 is the site of N-palmitoyl cysteine attachment. C16 carries the S-diacylglycerol cysteine lipid modification.

The protein belongs to the transglycosylase Slt family.

Its subcellular location is the cell outer membrane. It carries out the reaction Exolytic cleavage of the (1-&gt;4)-beta-glycosidic linkage between N-acetylmuramic acid (MurNAc) and N-acetylglucosamine (GlcNAc) residues in peptidoglycan, from either the reducing or the non-reducing ends of the peptidoglycan chains, with concomitant formation of a 1,6-anhydrobond in the MurNAc residue.. Functionally, murein-degrading enzyme. May play a role in recycling of muropeptides during cell elongation and/or cell division. This Haemophilus influenzae (strain ATCC 51907 / DSM 11121 / KW20 / Rd) protein is Membrane-bound lytic murein transglycosylase C.